Here is a 224-residue protein sequence, read N- to C-terminus: MKLGGIDEAGRGPVVGPLVIAAVVIDESKIEKFEALGVKDSKKLSPKKREELFEKIIELVDDYFILELSPEDIDKREGTMNDFEVENFAKVLNSLKIKPDLVYIDAADVNEERFGIVVREKLSFYPKIIAEHKADSKYIPVAAASILAKVTRDKAIERLKEIYGNIGSGYPSDPITRKFLEEYYKEHGSFPPVVRRSWKTLKKIEEKLQKEKNQSNLLNFLKKS.

The 210-residue stretch at 1 to 210 (MKLGGIDEAG…LKKIEEKLQK (210 aa)) folds into the RNase H type-2 domain. The a divalent metal cation site is built by Asp7, Glu8, and Asp105.

The protein belongs to the RNase HII family. Mn(2+) serves as cofactor. Requires Mg(2+) as cofactor.

Its subcellular location is the cytoplasm. It carries out the reaction Endonucleolytic cleavage to 5'-phosphomonoester.. Functionally, endonuclease that specifically degrades the RNA of RNA-DNA hybrids. This Thermococcus sibiricus (strain DSM 12597 / MM 739) protein is Ribonuclease HII.